The following is a 195-amino-acid chain: Putative Tricorn-like protease N-terminal subunit (195 aa).

This sequence belongs to the peptidase S41B family.

It localises to the cytoplasm. Functionally, degrades oligopeptides in a sequential manner. The sequence is that of Putative Tricorn-like protease N-terminal subunit (triN) from Sulfurisphaera tokodaii (strain DSM 16993 / JCM 10545 / NBRC 100140 / 7) (Sulfolobus tokodaii).